A 461-amino-acid polypeptide reads, in one-letter code: tRNA-2-methylthio-N(6)-dimethylallyladenosine synthase (461 aa).

Positions Pro-25–Ser-143 constitute an MTTase N-terminal domain. The [4Fe-4S] cluster site is built by Cys-34, Cys-70, Cys-104, Cys-179, Cys-183, and Cys-186. The Radical SAM core domain occupies Arg-165–Glu-395. Residues Lys-398–Asp-461 form the TRAM domain.

It belongs to the methylthiotransferase family. MiaB subfamily. In terms of assembly, monomer. The cofactor is [4Fe-4S] cluster.

It localises to the cytoplasm. The catalysed reaction is N(6)-dimethylallyladenosine(37) in tRNA + (sulfur carrier)-SH + AH2 + 2 S-adenosyl-L-methionine = 2-methylsulfanyl-N(6)-dimethylallyladenosine(37) in tRNA + (sulfur carrier)-H + 5'-deoxyadenosine + L-methionine + A + S-adenosyl-L-homocysteine + 2 H(+). Functionally, catalyzes the methylthiolation of N6-(dimethylallyl)adenosine (i(6)A), leading to the formation of 2-methylthio-N6-(dimethylallyl)adenosine (ms(2)i(6)A) at position 37 in tRNAs that read codons beginning with uridine. The protein is tRNA-2-methylthio-N(6)-dimethylallyladenosine synthase of Finegoldia magna (strain ATCC 29328 / DSM 20472 / WAL 2508) (Peptostreptococcus magnus).